Consider the following 273-residue polypeptide: uncharacterized protein (273 aa).

Positions 29–131 (TLVCVHGFLS…VVLLCSSGYL (103 aa)) constitute an AB hydrolase-1 domain. Active-site residues include Ser-102 and His-254.

It belongs to the DmpD/TodF/XylF esterase family.

This is an uncharacterized protein from Bacillus subtilis (strain 168).